Consider the following 317-residue polypeptide: Zinc finger protein CRM3 (317 aa).

Residues 1 to 15 show a composition bias toward low complexity; that stretch reads MNFSLSKQSSEKQSS. Residues 1–22 form a disordered region; that stretch reads MNFSLSKQSSEKQSSYTDKSRS. C2H2-type zinc fingers lie at residues 254 to 276 and 282 to 306; these read KQCP…YLIH and FKCT…LKSH.

The protein localises to the nucleus. Probable transcription factor involved in the regulation of the transcription of genes involved in cell rescue and defense, as well as cell cycle and DNA processing. The polypeptide is Zinc finger protein CRM3 (Saccharomyces cerevisiae (strain ATCC 204508 / S288c) (Baker's yeast)).